A 324-amino-acid polypeptide reads, in one-letter code: Glyceraldehyde-3-phosphate dehydrogenase 1 (324 aa).

Residues 13–14 (RI), Asp35, and Lys85 contribute to the NAD(+) site. D-glyceraldehyde 3-phosphate-binding positions include 157–159 (SCT), Thr188, 217–218 (TG), and Arg240. Cys158 acts as the Nucleophile in catalysis. Residue Asn322 coordinates NAD(+).

This sequence belongs to the glyceraldehyde-3-phosphate dehydrogenase family. Homotetramer.

It is found in the cytoplasm. It carries out the reaction D-glyceraldehyde 3-phosphate + phosphate + NAD(+) = (2R)-3-phospho-glyceroyl phosphate + NADH + H(+). It participates in carbohydrate degradation; glycolysis; pyruvate from D-glyceraldehyde 3-phosphate: step 1/5. The protein is Glyceraldehyde-3-phosphate dehydrogenase 1 (GPD-1) of Globodera rostochiensis (Golden nematode worm).